The following is a 228-amino-acid chain: Small ribosomal subunit protein uS2 (228 aa).

It belongs to the universal ribosomal protein uS2 family.

The chain is Small ribosomal subunit protein uS2 from Buchnera aphidicola subsp. Baizongia pistaciae (strain Bp).